A 310-amino-acid polypeptide reads, in one-letter code: Alpha/beta hydrolase domain-containing protein 17A (310 aa).

The segment at 38–61 is disordered; it reads VPEPEPGPGGAGAAPSGPLRTSAA. Active-site charge relay system residues include S190, D255, and H284. Position 307 is a phosphoserine (S307).

This sequence belongs to the AB hydrolase superfamily. ABHD17 family. Palmitoylated on cysteine residues located in a cysteine cluster at the N-terminus which promotes membrane localization. Palmitoylation is required for post-synaptic localization and for depalmitoylating activity towards DLG4/PSD95.

It is found in the cell membrane. The protein resides in the endosome membrane. The protein localises to the cell projection. It localises to the dendritic spine. Its subcellular location is the postsynaptic density membrane. It carries out the reaction S-hexadecanoyl-L-cysteinyl-[protein] + H2O = L-cysteinyl-[protein] + hexadecanoate + H(+). Hydrolyzes fatty acids from S-acylated cysteine residues in proteins. Has depalmitoylating activity towards NRAS. Has depalmitoylating activity towards DLG4/PSD95. May have depalmitoylating activity towars MAP6. The polypeptide is Alpha/beta hydrolase domain-containing protein 17A (Mus musculus (Mouse)).